The primary structure comprises 334 residues: Forkhead box protein N2 (334 aa).

Disordered regions lie at residues 1–52 and 83–108; these read MGPV…SGTT and SPLYDIEGDLSPSGCQTPEKLSASSK. The segment at residues 108–204 is a DNA-binding region (fork-head); sequence KPPYSFSLLI…QALKKQPFSS (97 aa).

It localises to the nucleus. This chain is Forkhead box protein N2, found in Xenopus tropicalis (Western clawed frog).